Here is a 723-residue protein sequence, read N- to C-terminus: Methionine--tRNA ligase (723 aa).

A 'HIGH' region motif is present at residues 12–22; sequence PYANGDIHLGH. Zn(2+) contacts are provided by Cys-143, Cys-146, Cys-156, and Cys-159. Residues 345–349 carry the 'KMSKS' region motif; the sequence is KMSKS. Residue Lys-348 coordinates ATP. The interval 568–604 is disordered; that stretch reads PAAATAPAKDAKPAKEAGSQQRHAEKQQHAAGVSETA. One can recognise a tRNA-binding domain in the interval 612–723; the sequence is DFTKVDLRIA…EGAQAGMRVK (112 aa).

This sequence belongs to the class-I aminoacyl-tRNA synthetase family. MetG type 1 subfamily. In terms of assembly, homodimer. Requires Zn(2+) as cofactor.

The protein localises to the cytoplasm. The enzyme catalyses tRNA(Met) + L-methionine + ATP = L-methionyl-tRNA(Met) + AMP + diphosphate. Functionally, is required not only for elongation of protein synthesis but also for the initiation of all mRNA translation through initiator tRNA(fMet) aminoacylation. In Azoarcus sp. (strain BH72), this protein is Methionine--tRNA ligase.